A 295-amino-acid chain; its full sequence is Putative attaching and effacing protein homolog (295 aa).

The N-terminal stretch at 1-25 (MSHYKTGHKQPRFRYSVLARCVAWA) is a signal peptide.

It belongs to the intimin/invasin family.

This Escherichia coli (strain K12) protein is Putative attaching and effacing protein homolog (eaeH).